We begin with the raw amino-acid sequence, 193 residues long: dCTP deaminase, dUMP-forming (193 aa).

Residues 107-112, D125, 133-135, Q154, and Y168 each bind dCTP; these read RSSLGR and TLE. E135 functions as the Proton donor/acceptor in the catalytic mechanism. The interval 169-193 is disordered; it reads AESSGKYHGDERPSPSKMHLDFCRG. A compositionally biased stretch (basic and acidic residues) spans 173 to 193; it reads GKYHGDERPSPSKMHLDFCRG.

The protein belongs to the dCTP deaminase family. Homotrimer.

The enzyme catalyses dCTP + 2 H2O = dUMP + NH4(+) + diphosphate. Its pathway is pyrimidine metabolism; dUMP biosynthesis; dUMP from dCTP: step 1/1. Its function is as follows. Bifunctional enzyme that catalyzes both the deamination of dCTP to dUTP and the hydrolysis of dUTP to dUMP without releasing the toxic dUTP intermediate. This Methanopyrus kandleri (strain AV19 / DSM 6324 / JCM 9639 / NBRC 100938) protein is dCTP deaminase, dUMP-forming.